The chain runs to 266 residues: 3-methyl-2-oxobutanoate hydroxymethyltransferase (266 aa).

Mg(2+) contacts are provided by aspartate 45 and aspartate 84. 3-methyl-2-oxobutanoate-binding positions include 45–46 (DS), aspartate 84, and lysine 112. Position 114 (glutamate 114) interacts with Mg(2+). Glutamate 181 (proton acceptor) is an active-site residue.

It belongs to the PanB family. As to quaternary structure, homodecamer; pentamer of dimers. It depends on Mg(2+) as a cofactor.

Its subcellular location is the cytoplasm. It carries out the reaction 3-methyl-2-oxobutanoate + (6R)-5,10-methylene-5,6,7,8-tetrahydrofolate + H2O = 2-dehydropantoate + (6S)-5,6,7,8-tetrahydrofolate. Its pathway is cofactor biosynthesis; (R)-pantothenate biosynthesis; (R)-pantoate from 3-methyl-2-oxobutanoate: step 1/2. In terms of biological role, catalyzes the reversible reaction in which hydroxymethyl group from 5,10-methylenetetrahydrofolate is transferred onto alpha-ketoisovalerate to form ketopantoate. This chain is 3-methyl-2-oxobutanoate hydroxymethyltransferase, found in Pseudomonas putida (strain ATCC 700007 / DSM 6899 / JCM 31910 / BCRC 17059 / LMG 24140 / F1).